Here is a 262-residue protein sequence, read N- to C-terminus: uncharacterized protein (262 aa).

Positions 5–107 (PLISLDVEGV…MIEHKLRTFC (103 aa)) constitute a BTB domain. A CRIB domain is found at 182–195 (ISLPRNFTHIAHVG).

This is an uncharacterized protein from Caenorhabditis elegans.